The following is a 267-amino-acid chain: Undecaprenyl-diphosphatase (267 aa).

8 consecutive transmembrane segments (helical) span residues 1–21 (MTYFEAFFLALLQGFTEFLPI), 39–59 (QGLAFDVAVHVGTLAAVVIYF), 83–103 (SNLAWLIVLATIPAALFGLLF), 111–131 (LRSAWVIAATTIVFGLLLWWV), 149–169 (ALFLGIAQAMAMIPGTSRSGI), 189–209 (FLMSIPIITLAGSYLGLKLAM), 218–238 (LLSTGVIVSFISAYICIHFFL), and 246–266 (MMPFVIYRILLGSSLLVWLAL).

This sequence belongs to the UppP family.

It localises to the cell inner membrane. It catalyses the reaction di-trans,octa-cis-undecaprenyl diphosphate + H2O = di-trans,octa-cis-undecaprenyl phosphate + phosphate + H(+). Catalyzes the dephosphorylation of undecaprenyl diphosphate (UPP). Confers resistance to bacitracin. This is Undecaprenyl-diphosphatase from Aliivibrio fischeri (strain MJ11) (Vibrio fischeri).